A 606-amino-acid chain; its full sequence is Mannan endo-1,4-beta-mannosidase A (606 aa).

The first 19 residues, 1-19, serve as a signal peptide directing secretion; it reads MKSLNVILTLLSLIISVLS. The CBM6 domain occupies 22 to 140; the sequence is VYYEAEDGKL…WMWVDAFVIN (119 aa). Residues 164 to 458 enclose the GH26 domain; it reads PAAKKLYDFL…FNHKTVMNMD (295 aa). Residue tryptophan 285 participates in substrate binding. The Proton donor role is filled by glutamate 318. Residues tryptophan 323 and tyrosine 378 each contribute to the substrate site. Glutamate 406 (nucleophile) is an active-site residue. The tract at residues 472 to 489 is linker; it reads SGSSHNGNSESNSNTGNS. 3 CBM10 domains span residues 491–527, 530–566, and 569–605; these read ECWS…CGIV, SCWS…CGIV, and SCWA…CGIL. Tryptophan 493 lines the substrate pocket.

It belongs to the glycosyl hydrolase 26 family.

The enzyme catalyses Random hydrolysis of (1-&gt;4)-beta-D-mannosidic linkages in mannans, galactomannans and glucomannans.. Hydrolyzes 1,4-beta linked polysaccharide backbones of mannans, one of the major hemicellulose components in hardwoods and softwoods. Shows very high activity against mannohexaose but not against mannopentaose and smaller mannooligosaccharides. The major products released from mannooligosaccharide hydrolysis are mannose and mannobiose. The reiterated 40 AA domain is involved in binding the cellulase-hemicellulase complex. The protein is Mannan endo-1,4-beta-mannosidase A (MANA) of Piromyces sp.